The sequence spans 234 residues: Leucyl/phenylalanyl-tRNA--protein transferase (234 aa).

This sequence belongs to the L/F-transferase family.

Its subcellular location is the cytoplasm. It carries out the reaction N-terminal L-lysyl-[protein] + L-leucyl-tRNA(Leu) = N-terminal L-leucyl-L-lysyl-[protein] + tRNA(Leu) + H(+). The catalysed reaction is N-terminal L-arginyl-[protein] + L-leucyl-tRNA(Leu) = N-terminal L-leucyl-L-arginyl-[protein] + tRNA(Leu) + H(+). It catalyses the reaction L-phenylalanyl-tRNA(Phe) + an N-terminal L-alpha-aminoacyl-[protein] = an N-terminal L-phenylalanyl-L-alpha-aminoacyl-[protein] + tRNA(Phe). Functionally, functions in the N-end rule pathway of protein degradation where it conjugates Leu, Phe and, less efficiently, Met from aminoacyl-tRNAs to the N-termini of proteins containing an N-terminal arginine or lysine. This Nitrosomonas eutropha (strain DSM 101675 / C91 / Nm57) protein is Leucyl/phenylalanyl-tRNA--protein transferase.